Consider the following 307-residue polypeptide: Transmembrane and coiled-coil domain-containing protein 5B (307 aa).

Positions Phe17–Asp207 form a coiled coil. The chain crosses the membrane as a helical span at residues Tyr243 to Leu265.

The protein belongs to the TMCO5 family.

Its subcellular location is the membrane. In Homo sapiens (Human), this protein is Transmembrane and coiled-coil domain-containing protein 5B (TMCO5B).